Here is a 334-residue protein sequence, read N- to C-terminus: Inositol 2-dehydrogenase (334 aa).

It belongs to the Gfo/Idh/MocA family. In terms of assembly, homotetramer.

The enzyme catalyses myo-inositol + NAD(+) = scyllo-inosose + NADH + H(+). Its function is as follows. Involved in the oxidation of myo-inositol (MI) to 2-keto-myo-inositol (2KMI or 2-inosose). The polypeptide is Inositol 2-dehydrogenase (Cereibacter sphaeroides (strain ATCC 17029 / ATH 2.4.9) (Rhodobacter sphaeroides)).